Reading from the N-terminus, the 881-residue chain is Phosphoenolpyruvate carboxylase (881 aa).

Catalysis depends on residues histidine 139 and lysine 544.

This sequence belongs to the PEPCase type 1 family. Requires Mg(2+) as cofactor.

The enzyme catalyses oxaloacetate + phosphate = phosphoenolpyruvate + hydrogencarbonate. Functionally, forms oxaloacetate, a four-carbon dicarboxylic acid source for the tricarboxylic acid cycle. The protein is Phosphoenolpyruvate carboxylase of Marinobacter nauticus (strain ATCC 700491 / DSM 11845 / VT8) (Marinobacter aquaeolei).